Consider the following 696-residue polypeptide: Equisetin cluster transcription factor eqxF (696 aa).

2 disordered regions span residues 1–24 and 73–117; these read MADQ…GRAR and NQEQ…PADY.

Its subcellular location is the nucleus. Its function is as follows. Transcription factor that regulates the expression of the gene cluster that mediates the biosynthesis of Equisetin. The sequence is that of Equisetin cluster transcription factor eqxF from Fusarium heterosporum.